A 410-amino-acid chain; its full sequence is Probable ATP-dependent RNA helicase MG308 (410 aa).

The 154-residue stretch at 26–179 folds into the Helicase ATP-binding domain; sequence VFKLWPFQNI…KKQVINTKVI (154 aa). 39–46 lines the ATP pocket; the sequence is AETGSGKT. The DEID box motif lies at 126 to 129; the sequence is DEID. The 168-residue stretch at 190–357 folds into the Helicase C-terminal domain; it reads LVKHFVVHLN…DLKFLTENNQ (168 aa).

It belongs to the DEAD box helicase family.

The enzyme catalyses ATP + H2O = ADP + phosphate + H(+). In Mycoplasma genitalium (strain ATCC 33530 / DSM 19775 / NCTC 10195 / G37) (Mycoplasmoides genitalium), this protein is Probable ATP-dependent RNA helicase MG308.